A 57-amino-acid chain; its full sequence is Large ribosomal subunit protein bL32B (57 aa).

This sequence belongs to the bacterial ribosomal protein bL32 family.

In Listeria welshimeri serovar 6b (strain ATCC 35897 / DSM 20650 / CCUG 15529 / CIP 8149 / NCTC 11857 / SLCC 5334 / V8), this protein is Large ribosomal subunit protein bL32B.